We begin with the raw amino-acid sequence, 134 residues long: UPF0412 protein YaaI (134 aa).

The N-terminal stretch at 1 to 23 is a signal peptide; sequence MKSVFTLSASLAISLMLCCTAQA.

The protein belongs to the UPF0412 family.

This is UPF0412 protein YaaI from Escherichia coli O17:K52:H18 (strain UMN026 / ExPEC).